Consider the following 335-residue polypeptide: Tetraacyldisaccharide 4'-kinase (335 aa).

Thr-58–Thr-65 is an ATP binding site.

This sequence belongs to the LpxK family.

The enzyme catalyses a lipid A disaccharide + ATP = a lipid IVA + ADP + H(+). The protein operates within glycolipid biosynthesis; lipid IV(A) biosynthesis; lipid IV(A) from (3R)-3-hydroxytetradecanoyl-[acyl-carrier-protein] and UDP-N-acetyl-alpha-D-glucosamine: step 6/6. Its function is as follows. Transfers the gamma-phosphate of ATP to the 4'-position of a tetraacyldisaccharide 1-phosphate intermediate (termed DS-1-P) to form tetraacyldisaccharide 1,4'-bis-phosphate (lipid IVA). This is Tetraacyldisaccharide 4'-kinase from Shewanella sp. (strain MR-7).